A 101-amino-acid chain; its full sequence is Small ribosomal subunit protein uS14 (101 aa).

The protein belongs to the universal ribosomal protein uS14 family. Part of the 30S ribosomal subunit. Contacts proteins S3 and S10.

Its function is as follows. Binds 16S rRNA, required for the assembly of 30S particles and may also be responsible for determining the conformation of the 16S rRNA at the A site. The chain is Small ribosomal subunit protein uS14 from Shewanella sediminis (strain HAW-EB3).